The chain runs to 360 residues: Probable dual-specificity RNA methyltransferase RlmN (360 aa).

E97 (proton acceptor) is an active-site residue. The Radical SAM core domain maps to 103–330; it reads DGDRLTFCIS…TAVRRSRGLD (228 aa). A disulfide bridge links C110 with C335. C117, C121, and C124 together coordinate [4Fe-4S] cluster. Residues 165–166, S197, 220–222, and H292 contribute to the S-adenosyl-L-methionine site; these read GE and SIH. C335 functions as the S-methylcysteine intermediate in the catalytic mechanism.

It belongs to the radical SAM superfamily. RlmN family. [4Fe-4S] cluster serves as cofactor.

The protein localises to the cytoplasm. The enzyme catalyses adenosine(2503) in 23S rRNA + 2 reduced [2Fe-2S]-[ferredoxin] + 2 S-adenosyl-L-methionine = 2-methyladenosine(2503) in 23S rRNA + 5'-deoxyadenosine + L-methionine + 2 oxidized [2Fe-2S]-[ferredoxin] + S-adenosyl-L-homocysteine. It carries out the reaction adenosine(37) in tRNA + 2 reduced [2Fe-2S]-[ferredoxin] + 2 S-adenosyl-L-methionine = 2-methyladenosine(37) in tRNA + 5'-deoxyadenosine + L-methionine + 2 oxidized [2Fe-2S]-[ferredoxin] + S-adenosyl-L-homocysteine. Functionally, specifically methylates position 2 of adenine 2503 in 23S rRNA and position 2 of adenine 37 in tRNAs. This is Probable dual-specificity RNA methyltransferase RlmN from Gemmatimonas aurantiaca (strain DSM 14586 / JCM 11422 / NBRC 100505 / T-27).